The sequence spans 212 residues: RNA chaperone ProQ (212 aa).

Positions 107 to 153 are disordered; sequence QDKAKAKRVAQAKSANPAAKTAKKPVKKPVAKRPKPAQSSKPAKEPV. Over residues 117 to 126 the composition is skewed to low complexity; sequence QAKSANPAAK. Residues 127-141 are compositionally biased toward basic residues; the sequence is TAKKPVKKPVAKRPK.

This sequence belongs to the ProQ family.

The protein localises to the cytoplasm. Its function is as follows. RNA chaperone with significant RNA binding, RNA strand exchange and RNA duplexing activities. The protein is RNA chaperone ProQ of Shewanella pealeana (strain ATCC 700345 / ANG-SQ1).